A 376-amino-acid chain; its full sequence is GDSL esterase/lipase 2 (376 aa).

Residues 1–25 (MENSRSTLIIFFAYTTIILIGSINC) form the signal peptide. N-linked (GlcNAc...) asparagine glycosylation is present at Asn36. The Nucleophile role is filled by Ser46. Asn186 and Asn205 each carry an N-linked (GlcNAc...) asparagine glycan. Active-site residues include Asp340 and His343. An N-linked (GlcNAc...) asparagine glycan is attached at Asn362.

It belongs to the 'GDSL' lipolytic enzyme family. In terms of tissue distribution, expressed seedlings, roots and stems.

The protein resides in the secreted. Its function is as follows. Involved in the resistance to the necrotropic bacteria Erwinia carotovora, probably via negative regulation of auxin signaling. Possesses lipase and antimicrobial activities, inhibiting germination of fungal spores (e.g. Alternaria brassicicola). In Arabidopsis thaliana (Mouse-ear cress), this protein is GDSL esterase/lipase 2 (GLIP2).